A 158-amino-acid chain; its full sequence is Cyclic pyranopterin monophosphate synthase (158 aa).

Substrate contacts are provided by residues 75–77 and 113–114; these read LCH and ME. Residue Asp-128 is part of the active site.

It belongs to the MoaC family. In terms of assembly, homohexamer; trimer of dimers.

The enzyme catalyses (8S)-3',8-cyclo-7,8-dihydroguanosine 5'-triphosphate = cyclic pyranopterin phosphate + diphosphate. Its pathway is cofactor biosynthesis; molybdopterin biosynthesis. Catalyzes the conversion of (8S)-3',8-cyclo-7,8-dihydroguanosine 5'-triphosphate to cyclic pyranopterin monophosphate (cPMP). The protein is Cyclic pyranopterin monophosphate synthase of Actinobacillus pleuropneumoniae serotype 5b (strain L20).